The primary structure comprises 115 residues: NADH-ubiquinone oxidoreductase chain 3 (115 aa).

3 helical membrane-spanning segments follow: residues 4-24 (LTVL…AFWL), 55-75 (FFLV…LLPL), and 87-107 (MMLT…YEWM).

This sequence belongs to the complex I subunit 3 family. As to quaternary structure, core subunit of respiratory chain NADH dehydrogenase (Complex I) which is composed of 45 different subunits. Interacts with TMEM186. Interacts with TMEM242.

It is found in the mitochondrion inner membrane. It carries out the reaction a ubiquinone + NADH + 5 H(+)(in) = a ubiquinol + NAD(+) + 4 H(+)(out). Core subunit of the mitochondrial membrane respiratory chain NADH dehydrogenase (Complex I) which catalyzes electron transfer from NADH through the respiratory chain, using ubiquinone as an electron acceptor. Essential for the catalytic activity of complex I. The sequence is that of NADH-ubiquinone oxidoreductase chain 3 from Peromyscus slevini (Slevin's mouse).